The following is a 1007-amino-acid chain: Inversin-A (1007 aa).

16 ANK repeats span residues 9–39, 43–72, 76–105, 109–140, 144–173, 177–209, 216–246, 250–279, 284–313, 317–346, 352–381, 385–414, 418–447, 451–480, 484–513, and 519–549; these read SLAS…VIDQ, LGRT…QVNH, SGRT…DCTH, RDIT…QVDA, RKQT…NIGI, EGKI…TESL, EGRT…NVAP, LFRT…SPNI, QGAT…VRDE, EGRT…ELEV, YGGT…QVDA, MKHT…KVHL, DGRS…NPDA, EGRT…DPNI, NGRT…FPNQ, and ERYT…SIAA. Residues 486–494 carry the D-box 1 motif; it reads RTALHWSCN. The region spanning 551–580 is the IQ 1 domain; that stretch reads QDIAASKIQAVYKGHKVRRAFQERKNLLMK. 2 stretches are compositionally biased toward basic and acidic residues: residues 585–599 and 608–652; these read RKGA…ENRQ and GKQK…HQEE. 2 disordered regions span residues 585 to 837 and 868 to 893; these read RKGA…KEFS and SAKS…SALK. Over residues 684-701 the composition is skewed to polar residues; the sequence is IQSSPIEHVHTNSIQTRM. Residues 702 to 712 show a composition bias toward low complexity; it reads SPSRTSISHSS. Over residues 727-745 the composition is skewed to polar residues; sequence NPTQNNTQPRRTSRPQIES. Positions 751-771 are enriched in basic and acidic residues; sequence HRIEDLVQKESRRKSHREERK. Over residues 772 to 784 the composition is skewed to basic residues; the sequence is GSHRQRASSHHRL. Over residues 870–893 the composition is skewed to polar residues; the sequence is KSGQRPLTETQSPEKACQGSSALK. Residues 964 to 972 carry the D-box 2 motif; it reads RKQLFQRKK. Residues 971–1000 enclose the IQ 2 domain; that stretch reads KKHAATVIQKAWRTYCIRKSSRKTRHSHLR.

Interacts with apc2. Binds calmodulin.

The protein resides in the cytoplasm. Its subcellular location is the cytoskeleton. In terms of biological role, required for normal renal development and establishment of left-right axis. Probably acts as a molecular switch between different Wnt signaling pathways. Inhibits the canonical Wnt pathway by targeting cytoplasmic disheveled for degradation by the ubiquitin-proteasome. This suggests that it is required in renal development to oppose the repression of terminal differentiation of tubular epithelial cells by Wnt signaling. Plays a central role in convergent extension movements in gastrulating embryos, a processus regulated by Wnt signaling. The chain is Inversin-A (invs-a) from Xenopus laevis (African clawed frog).